We begin with the raw amino-acid sequence, 129 residues long: Photosystem II reaction center Psb28 protein (129 aa).

The interval 110–129 is disordered; that stretch reads GLGYSNNSGNNEGADEASEG.

It belongs to the Psb28 family. As to quaternary structure, part of the photosystem II complex.

Its subcellular location is the cellular thylakoid membrane. The chain is Photosystem II reaction center Psb28 protein from Synechococcus sp. (strain WH7803).